The sequence spans 607 residues: Granule-bound starch synthase 1, chloroplastic/amyloplastic (607 aa).

Residues 1–77 (MASITASHHF…RPGCSATIVC (77 aa)) constitute a chloroplast transit peptide. Lysine 95 is an ADP-alpha-D-glucose binding site. The interval 585 to 607 (SGSEPGVEGEEIAPLAKENVATP) is disordered.

The protein belongs to the glycosyltransferase 1 family. Bacterial/plant glycogen synthase subfamily.

It localises to the plastid. The protein localises to the chloroplast. The protein resides in the amyloplast. It carries out the reaction an NDP-alpha-D-glucose + [(1-&gt;4)-alpha-D-glucosyl](n) = [(1-&gt;4)-alpha-D-glucosyl](n+1) + a ribonucleoside 5'-diphosphate + H(+). It participates in glycan biosynthesis; starch biosynthesis. The polypeptide is Granule-bound starch synthase 1, chloroplastic/amyloplastic (WAXY) (Solanum tuberosum (Potato)).